The sequence spans 190 residues: Superoxide dismutase [Cu-Zn] (190 aa).

The first 23 residues, 1 to 23 (MKLTNLALAFTLFGASAVAFAHA), serve as a signal peptide directing secretion. Residues H83, H85, and H108 each contribute to the Cu cation site. Cysteines 90 and 186 form a disulfide. Zn(2+)-binding residues include H108, H117, H126, and D129. The segment at 162-181 (MIHEGGDNHSDHPAPLGGGG) is disordered. A Cu cation-binding site is contributed by H164.

Belongs to the Cu-Zn superoxide dismutase family. As to quaternary structure, homodimer. Cu cation is required as a cofactor. Zn(2+) serves as cofactor.

The protein localises to the periplasm. It carries out the reaction 2 superoxide + 2 H(+) = H2O2 + O2. Destroys radicals which are normally produced within the cells and which are toxic to biological systems. The protein is Superoxide dismutase [Cu-Zn] (sodC) of Actinobacillus pleuropneumoniae (Haemophilus pleuropneumoniae).